The primary structure comprises 266 residues: Aspartate/glutamate leucyltransferase (266 aa).

This sequence belongs to the R-transferase family. Bpt subfamily.

The protein localises to the cytoplasm. The catalysed reaction is N-terminal L-glutamyl-[protein] + L-leucyl-tRNA(Leu) = N-terminal L-leucyl-L-glutamyl-[protein] + tRNA(Leu) + H(+). The enzyme catalyses N-terminal L-aspartyl-[protein] + L-leucyl-tRNA(Leu) = N-terminal L-leucyl-L-aspartyl-[protein] + tRNA(Leu) + H(+). Functions in the N-end rule pathway of protein degradation where it conjugates Leu from its aminoacyl-tRNA to the N-termini of proteins containing an N-terminal aspartate or glutamate. This is Aspartate/glutamate leucyltransferase from Rhizorhabdus wittichii (strain DSM 6014 / CCUG 31198 / JCM 15750 / NBRC 105917 / EY 4224 / RW1) (Sphingomonas wittichii).